Consider the following 245-residue polypeptide: Protein OXIDATIVE STRESS 3 LIKE 6 (245 aa).

The segment at 46 to 90 (QIGIGLRMSNNNNKSPEESSDSSSSIGESSENEEEEEEDDAVSCQ) is disordered. The segment covering 75–86 (SENEEEEEEDDA) has biased composition (acidic residues). A Nuclear localization signal motif is present at residues 143–151 (NKRRRLVIA). The tract at residues 203–230 (DDHRKIMMMMKNKKELMAQTRSCFCLSS) is kinase-inducible domain (KID).

It localises to the nucleus. Functionally, probable transcription factor. Promotes slightly the tolerance to cadmium (Cd) and to oxidizing chemicals (e.g. diamide). The chain is Protein OXIDATIVE STRESS 3 LIKE 6 from Arabidopsis thaliana (Mouse-ear cress).